An 842-amino-acid chain; its full sequence is Leucine--tRNA ligase (842 aa).

Residues 44–55 (PYPSANGLHVGH) carry the 'HIGH' region motif. A 'KMSKS' region motif is present at residues 619 to 623 (KMSKS). K622 contacts ATP.

It belongs to the class-I aminoacyl-tRNA synthetase family.

Its subcellular location is the cytoplasm. The enzyme catalyses tRNA(Leu) + L-leucine + ATP = L-leucyl-tRNA(Leu) + AMP + diphosphate. The sequence is that of Leucine--tRNA ligase from Borrelia hermsii (strain HS1 / DAH).